Reading from the N-terminus, the 218-residue chain is Large ribosomal subunit protein uL2c (218 aa).

The tract at residues 165 to 192 (GVVKNPVDHPHGGGEGRSPIGRSHPVTP) is disordered.

The protein belongs to the universal ribosomal protein uL2 family. As to quaternary structure, part of the 50S ribosomal subunit.

The protein localises to the plastid. The protein resides in the chloroplast. The polypeptide is Large ribosomal subunit protein uL2c (rpl2) (Bigelowiella natans (Pedinomonas minutissima)).